A 302-amino-acid chain; its full sequence is Aspartate carbamoyltransferase catalytic subunit (302 aa).

Positions 53 and 54 each coordinate carbamoyl phosphate. Position 82 (lysine 82) interacts with L-aspartate. Residues arginine 103, histidine 131, and glutamine 134 each contribute to the carbamoyl phosphate site. Arginine 164 and arginine 223 together coordinate L-aspartate. The carbamoyl phosphate site is built by leucine 260 and proline 261.

The protein belongs to the aspartate/ornithine carbamoyltransferase superfamily. ATCase family. In terms of assembly, heterooligomer of catalytic and regulatory chains.

The catalysed reaction is carbamoyl phosphate + L-aspartate = N-carbamoyl-L-aspartate + phosphate + H(+). It participates in pyrimidine metabolism; UMP biosynthesis via de novo pathway; (S)-dihydroorotate from bicarbonate: step 2/3. In terms of biological role, catalyzes the condensation of carbamoyl phosphate and aspartate to form carbamoyl aspartate and inorganic phosphate, the committed step in the de novo pyrimidine nucleotide biosynthesis pathway. This Methanococcus maripaludis (strain C6 / ATCC BAA-1332) protein is Aspartate carbamoyltransferase catalytic subunit.